Here is a 505-residue protein sequence, read N- to C-terminus: ATP synthase subunit alpha (505 aa).

170–177 contacts ATP; sequence GDRQTGKS.

This sequence belongs to the ATPase alpha/beta chains family. In terms of assembly, F-type ATPases have 2 components, CF(1) - the catalytic core - and CF(0) - the membrane proton channel. CF(1) has five subunits: alpha(3), beta(3), gamma(1), delta(1), epsilon(1). CF(0) has four main subunits: a(1), b(1), b'(1) and c(9-12).

It localises to the cellular thylakoid membrane. The catalysed reaction is ATP + H2O + 4 H(+)(in) = ADP + phosphate + 5 H(+)(out). In terms of biological role, produces ATP from ADP in the presence of a proton gradient across the membrane. The alpha chain is a regulatory subunit. This Prochlorococcus marinus (strain AS9601) protein is ATP synthase subunit alpha.